We begin with the raw amino-acid sequence, 181 residues long: Vacuolar ATPase assembly protein VMA22 (181 aa).

N-acetylalanine is present on Ser2. 2 stretches are compositionally biased toward basic and acidic residues: residues 93-107 (AQDK…DNKL) and 114-125 (TKPEKQKTQSHK). A disordered region spans residues 93–125 (AQDKQEKKEEEDNKLTQRKKGTKPEKQKTQSHK).

Its function is as follows. Required for V-ATPase activity. The protein is Vacuolar ATPase assembly protein VMA22 (VMA22) of Saccharomyces cerevisiae (strain ATCC 204508 / S288c) (Baker's yeast).